The sequence spans 307 residues: MRIVFAGTPAPALPSLERLLASRHEVVAVLTRPDARAGRGRASASSPVAALAREHGVAVLTPARPNEPEFVRELAQLDVDCCAVVAYGALLKPELLAVPRLGWVNLHFSLLPAWRGAAPVQASIAAGDEITGATTFLIEPALDSGPVYGVVTERISPNDTAGALLGRLAESGAGLLESTMDGIEDGALVAVPQAVDGVSIAPKITVEQARIRWELPAHAIDRHIRAMTPEPGAWTNIGGTRVKVGPVGVATDEQLPPGAVAVRKRDVLVGTGTTAIALDEVQPQGKKVMKAADWARGARLDAEVHAL.

109–112 (SLLP) contributes to the (6S)-5,6,7,8-tetrahydrofolate binding site.

The protein belongs to the Fmt family.

The catalysed reaction is L-methionyl-tRNA(fMet) + (6R)-10-formyltetrahydrofolate = N-formyl-L-methionyl-tRNA(fMet) + (6S)-5,6,7,8-tetrahydrofolate + H(+). In terms of biological role, attaches a formyl group to the free amino group of methionyl-tRNA(fMet). The formyl group appears to play a dual role in the initiator identity of N-formylmethionyl-tRNA by promoting its recognition by IF2 and preventing the misappropriation of this tRNA by the elongation apparatus. This chain is Methionyl-tRNA formyltransferase, found in Mycobacteroides abscessus (strain ATCC 19977 / DSM 44196 / CCUG 20993 / CIP 104536 / JCM 13569 / NCTC 13031 / TMC 1543 / L948) (Mycobacterium abscessus).